The chain runs to 209 residues: ATP-dependent Clp protease proteolytic subunit (209 aa).

Ser-106 acts as the Nucleophile in catalysis. His-131 is a catalytic residue.

This sequence belongs to the peptidase S14 family. Fourteen ClpP subunits assemble into 2 heptameric rings which stack back to back to give a disk-like structure with a central cavity, resembling the structure of eukaryotic proteasomes.

Its subcellular location is the cytoplasm. It carries out the reaction Hydrolysis of proteins to small peptides in the presence of ATP and magnesium. alpha-casein is the usual test substrate. In the absence of ATP, only oligopeptides shorter than five residues are hydrolyzed (such as succinyl-Leu-Tyr-|-NHMec, and Leu-Tyr-Leu-|-Tyr-Trp, in which cleavage of the -Tyr-|-Leu- and -Tyr-|-Trp bonds also occurs).. Functionally, cleaves peptides in various proteins in a process that requires ATP hydrolysis. Has a chymotrypsin-like activity. Plays a major role in the degradation of misfolded proteins. In Brucella melitensis biotype 2 (strain ATCC 23457), this protein is ATP-dependent Clp protease proteolytic subunit.